Consider the following 367-residue polypeptide: Adenine deaminase (367 aa).

Zn(2+)-binding residues include H19, H21, and H209. Catalysis depends on E212, which acts as the Proton donor. D290 provides a ligand contact to Zn(2+). Residue D291 participates in substrate binding.

This sequence belongs to the metallo-dependent hydrolases superfamily. Adenosine and AMP deaminases family. Adenine deaminase type 2 subfamily. It depends on Zn(2+) as a cofactor.

The protein resides in the cytoplasm. Its subcellular location is the nucleus. The enzyme catalyses adenine + H2O + H(+) = hypoxanthine + NH4(+). In terms of biological role, catalyzes the hydrolytic deamination of adenine to hypoxanthine. Plays an important role in the purine salvage pathway and in nitrogen catabolism. Also exhibits a low activity towards N(6)-substituted adenines that are commonly known as the plant hormones cytokinins. The polypeptide is Adenine deaminase (Schizosaccharomyces pombe (strain 972 / ATCC 24843) (Fission yeast)).